The chain runs to 450 residues: Tubulin alpha-4 chain (450 aa).

Glutamine 11 provides a ligand contact to GTP. Lysine 40 carries the post-translational modification N6-acetyllysine. GTP is bound by residues glutamate 71, glycine 144, threonine 145, threonine 179, asparagine 206, and asparagine 228. Position 71 (glutamate 71) interacts with Mg(2+). Glutamate 254 is a catalytic residue. Residues 431-450 form a disordered region; the sequence is DYEEVGAESGEGDEGDEEEY.

This sequence belongs to the tubulin family. Dimer of alpha and beta chains. A typical microtubule is a hollow water-filled tube with an outer diameter of 25 nm and an inner diameter of 15 nM. Alpha-beta heterodimers associate head-to-tail to form protofilaments running lengthwise along the microtubule wall with the beta-tubulin subunit facing the microtubule plus end conferring a structural polarity. Microtubules usually have 13 protofilaments but different protofilament numbers can be found in some organisms and specialized cells. It depends on Mg(2+) as a cofactor. In terms of processing, undergoes a tyrosination/detyrosination cycle, the cyclic removal and re-addition of a C-terminal tyrosine residue by the enzymes tubulin tyrosine carboxypeptidase (TTCP) and tubulin tyrosine ligase (TTL), respectively. Post-translationally, acetylation of alpha chains at Lys-40 stabilizes microtubules and affects affinity and processivity of microtubule motors. This modification has a role in multiple cellular functions, ranging from cell motility, cell cycle progression or cell differentiation to intracellular trafficking and signaling.

The protein resides in the cytoplasm. It localises to the cytoskeleton. It catalyses the reaction GTP + H2O = GDP + phosphate + H(+). Tubulin is the major constituent of microtubules, a cylinder consisting of laterally associated linear protofilaments composed of alpha- and beta-tubulin heterodimers. Microtubules grow by the addition of GTP-tubulin dimers to the microtubule end, where a stabilizing cap forms. Below the cap, tubulin dimers are in GDP-bound state, owing to GTPase activity of alpha-tubulin. This Gossypium hirsutum (Upland cotton) protein is Tubulin alpha-4 chain.